Reading from the N-terminus, the 114-residue chain is Late cornified envelope protein 1D (114 aa).

A compositionally biased stretch (low complexity) spans 1 to 10; that stretch reads MSCQQSQQQC. 2 disordered regions span residues 1–21 and 75–114; these read MSCQ…PKCT and HHRR…GGCC. Residues 75-86 show a composition bias toward basic residues; the sequence is HHRRHRSHRRRP. Low complexity predominate over residues 88-99; sequence SSDCCSQPSGGS.

Belongs to the LCE family. Interacts with CYSRT1. In terms of tissue distribution, skin-specific. Expression was readily detected in adult trunk skin, adult arm skin, fetal skin, penal skin, vulva, esophagus and tongue. Not expressed in the cervix, rectum, lung, colon, or placenta.

Functionally, precursors of the cornified envelope of the stratum corneum. The protein is Late cornified envelope protein 1D (LCE1D) of Homo sapiens (Human).